The following is a 308-amino-acid chain: tRNA pseudouridine synthase B (308 aa).

Residue Asp-49 is the Nucleophile of the active site.

This sequence belongs to the pseudouridine synthase TruB family. Type 1 subfamily.

It carries out the reaction uridine(55) in tRNA = pseudouridine(55) in tRNA. Functionally, responsible for synthesis of pseudouridine from uracil-55 in the psi GC loop of transfer RNAs. This Nitrosococcus oceani (strain ATCC 19707 / BCRC 17464 / JCM 30415 / NCIMB 11848 / C-107) protein is tRNA pseudouridine synthase B.